The chain runs to 1024 residues: MTMITDSLAVVLQRRDWENPGVTQLNRLAAHPPFASWRNSEEARTDRPSQQLRSLNGEWRFAWFPAPEAVPESWLECDLPDADTVVVPSNWQMHGYDAPIYTNVTYPITVNPPFVPAENPTGCYSLTFNIDESWLQEGQTRIIFDGVNSAFHLWCNGRWVGYGQDSRLPSEFDLSAFLRAGENRLAVMVLRWSDGSYLEDQDMWRMSGIFRDVSLLHKPTTQISDFQVTTLFNDDFSRAVLEAEVQMYGELRDELRVTVSLWQGETQVASGTAPFGGEIIDERGGYADRVTLRLNVENPELWSAEIPNLYRAVVELHTADGTLIEAEACDVGFREVRIENGLLLLNGKPLLIRGVNRHEHHPLHGQVMDEQTMVQDILLMKQNNFNAVRCSHYPNHPLWYTLCDRYGLYVVDEANIETHGMVPMNRLTDDPRWLPAMSERVTRMVQRDRNHPSVIIWSLGNESGHGANHDALYRWIKSVDPSRPVQYEGGGADTTATDIICPMYARVDEDQPFPAVPKWSIKKWLSLPGEMRPLILCEYAHAMGNSLGGFAKYWQAFRQYPRLQGGFVWDWVDQSLIKYDENGNPWSAYGGDFGDTPNDRQFCMNGLVFADRTPHPALTEAKHQQQYFQFRLSGRTIEVTSEYLFRHSDNEFLHWMVALDGKPLASGEVPLDVGPQGKQLIELPELPQPESAGQLWLTVRVVQPNATAWSEAGHISAWQQWRLAENLSVTLPSASHAIPQLTTSGTDFCIELGNKRWQFNRQSGFLSQMWIGDEKQLLTPLRDQFTRAPLDNDIGVSEATRIDPNAWVERWKAAGHYQAEAALLQCTADTLADAVLITTAHAWQHQGKTLFISRKTYRIDGHGEMVINVDVAVASDTPHPARIGLTCQLAQVSERVNWLGLGPQENYPDRLTAACFDRWDLPLSDMYTPYVFPSENGLRCGTRELNYGPHQWRGDFQFNISRYSQQQLMETSHRHLLHAEEGTWLNIDGFHMGIGGDDSWSPSVSAEFQLSAGRYHYQLVWCQK.

Positions 103 and 202 each coordinate substrate. Aspartate 202 serves as a coordination point for Na(+). Residues glutamate 417, histidine 419, and glutamate 462 each contribute to the Mg(2+) site. Substrate contacts are provided by residues glutamate 462 and 538-541 (EYAH). The Proton donor role is filled by glutamate 462. The Nucleophile role is filled by glutamate 538. Position 598 (asparagine 598) interacts with Mg(2+). Phenylalanine 602 and asparagine 605 together coordinate Na(+). Residues asparagine 605 and tryptophan 1000 each contribute to the substrate site.

Belongs to the glycosyl hydrolase 2 family. In terms of assembly, homotetramer. Mg(2+) is required as a cofactor. Na(+) serves as cofactor.

The catalysed reaction is Hydrolysis of terminal non-reducing beta-D-galactose residues in beta-D-galactosides.. This is Beta-galactosidase from Escherichia coli O6:H1 (strain CFT073 / ATCC 700928 / UPEC).